A 198-amino-acid polypeptide reads, in one-letter code: Putative 3-methyladenine DNA glycosylase (198 aa).

The protein belongs to the DNA glycosylase MPG family.

In Oceanobacillus iheyensis (strain DSM 14371 / CIP 107618 / JCM 11309 / KCTC 3954 / HTE831), this protein is Putative 3-methyladenine DNA glycosylase.